The sequence spans 995 residues: S1 RNA-binding domain-containing protein 1 (995 aa).

The interval 23-78 (SFSELSSASEEDDKEDSAWEPQKKVPRSRKQPPPKESKPKRMPQVKKNAPQISDGS) is disordered. Residue lysine 84 forms a Glycyl lysine isopeptide (Lys-Gly) (interchain with G-Cter in SUMO2) linkage. Basic residues predominate over residues 116 to 132 (TKRKCAAQPHAVRRTKK). Residues 116–164 (TKRKCAAQPHAVRRTKKLKVDEETSKASYLEGESNSSETPSTSTVWGGT) form a disordered region. Residue lysine 134 forms a Glycyl lysine isopeptide (Lys-Gly) (interchain with G-Cter in SUMO2) linkage. A compositionally biased stretch (low complexity) spans 146–159 (EGESNSSETPSTST). Residues lysine 166, lysine 167, and lysine 183 each participate in a glycyl lysine isopeptide (Lys-Gly) (interchain with G-Cter in SUMO2) cross-link. A Glycyl lysine isopeptide (Lys-Gly) (interchain with G-Cter in SUMO1); alternate cross-link involves residue lysine 185. Lysine 185 is covalently cross-linked (Glycyl lysine isopeptide (Lys-Gly) (interchain with G-Cter in SUMO2); alternate). The stretch at 258 to 288 (ADSLREVQQTLEELRAVAKKVHSTIQKIKKE) forms a coiled coil. Serine 861 carries the post-translational modification Phosphoserine. Residues 919–992 (GTVLTGKVEN…PRSRITLDLI (74 aa)) enclose the S1 motif domain. A Glycyl lysine isopeptide (Lys-Gly) (interchain with G-Cter in SUMO2) cross-link involves residue lysine 955. Serine 964 carries the phosphoserine modification.

In Pongo abelii (Sumatran orangutan), this protein is S1 RNA-binding domain-containing protein 1 (SRBD1).